We begin with the raw amino-acid sequence, 528 residues long: Tyrosine--tRNA ligase, cytoplasmic (528 aa).

Met1 carries the post-translational modification N-acetylmethionine. Gly2 is modified (N-acetylglycine; in Tyrosine--tRNA ligase, cytoplasmic, N-terminally processed). Residue Tyr39 participates in L-tyrosine binding. Tyr39 is a trans-resveratrol binding site. Positions 44 to 52 (TTGKPHVAY) match the 'HIGH' region motif. The L-tyrosine site is built by Tyr166, Gln170, Asp173, and Gln188. 2 residues coordinate trans-resveratrol: Gln170 and Asp173. Lys197 carries the N6-acetyllysine modification. Residue Ser205 is modified to Phosphoserine. Lys206 is modified (N6-acetyllysine). Residues 222 to 226 (KMSSS) carry the 'KMSKS' region motif. The Nuclear localization signal motif lies at 242–247 (KKKLKK). A disordered region spans residues 339–363 (AAYPDPSKQKPTAKGPAKSSEPEEI). A tRNA-binding domain is found at 364 to 468 (IPSRLDIRVG…AGSAPGERVF (105 aa)). A Phosphoserine modification is found at Ser386. N6-acetyllysine occurs at positions 474, 482, and 490.

Belongs to the class-I aminoacyl-tRNA synthetase family. Homodimer. Interacts (when binding to resveratrol) with PARP1; interaction stimulates the poly-ADP-ribosyltransferase activity of PARP1.

Its subcellular location is the cytoplasm. The protein resides in the nucleus. The enzyme catalyses tRNA(Tyr) + L-tyrosine + ATP = L-tyrosyl-tRNA(Tyr) + AMP + diphosphate + H(+). With respect to regulation, resveratrol strongly inhibits the tyrosine--tRNA ligase activity. Functionally, tyrosine--tRNA ligase that catalyzes the attachment of tyrosine to tRNA(Tyr) in a two-step reaction: tyrosine is first activated by ATP to form Tyr-AMP and then transferred to the acceptor end of tRNA(Tyr). Also acts as a positive regulator of poly-ADP-ribosylation in the nucleus, independently of its tyrosine--tRNA ligase activity. Activity is switched upon resveratrol-binding: resveratrol strongly inhibits the tyrosine--tRNA ligase activity and promotes relocalization to the nucleus, where YARS1 specifically stimulates the poly-ADP-ribosyltransferase activity of PARP1. The sequence is that of Tyrosine--tRNA ligase, cytoplasmic (Yars1) from Rattus norvegicus (Rat).